We begin with the raw amino-acid sequence, 276 residues long: 4-diphosphocytidyl-2-C-methyl-D-erythritol kinase (276 aa).

Lys-13 is a catalytic residue. 94–104 contributes to the ATP binding site; it reads PHAGGIGGGSA. Residue Asp-131 is part of the active site.

The protein belongs to the GHMP kinase family. IspE subfamily.

It catalyses the reaction 4-CDP-2-C-methyl-D-erythritol + ATP = 4-CDP-2-C-methyl-D-erythritol 2-phosphate + ADP + H(+). It functions in the pathway isoprenoid biosynthesis; isopentenyl diphosphate biosynthesis via DXP pathway; isopentenyl diphosphate from 1-deoxy-D-xylulose 5-phosphate: step 3/6. Catalyzes the phosphorylation of the position 2 hydroxy group of 4-diphosphocytidyl-2C-methyl-D-erythritol. The protein is 4-diphosphocytidyl-2-C-methyl-D-erythritol kinase of Jannaschia sp. (strain CCS1).